Consider the following 395-residue polypeptide: Elongation factor Tu (395 aa).

Residues 10–204 (KPHVNIGTIG…AVDSYIPTPE (195 aa)) form the tr-type G domain. The segment at 19–26 (GHVDHGKT) is G1. Residue 19 to 26 (GHVDHGKT) participates in GTP binding. Thr26 contributes to the Mg(2+) binding site. Positions 60 to 64 (GITIS) are G2. Residues 81-84 (DCPG) are G3. Residues 81–85 (DCPGH) and 136–139 (NKCD) each bind GTP. Residues 136–139 (NKCD) are G4. The interval 174–176 (SAL) is G5.

This sequence belongs to the TRAFAC class translation factor GTPase superfamily. Classic translation factor GTPase family. EF-Tu/EF-1A subfamily. In terms of assembly, monomer.

The protein localises to the cytoplasm. The enzyme catalyses GTP + H2O = GDP + phosphate + H(+). In terms of biological role, GTP hydrolase that promotes the GTP-dependent binding of aminoacyl-tRNA to the A-site of ribosomes during protein biosynthesis. The sequence is that of Elongation factor Tu from Listeria monocytogenes serotype 4b (strain CLIP80459).